The following is a 297-amino-acid chain: L-threonate dehydrogenase (297 aa).

NAD(+) is bound by residues 3 to 31 (RNIG…VHAC) and Thr97. Residue Lys173 is part of the active site. Lys241 lines the NAD(+) pocket.

The protein belongs to the HIBADH-related family. L-threonate dehydrogenase subfamily.

The catalysed reaction is L-threonate + NAD(+) = 2-dehydro-L-erythronate + NADH + H(+). Its function is as follows. Catalyzes oxidation of L-threonate to 2-oxo-tetronate. Can use either NAD(+) or NADP(+) as cosubstrate, with a preference for NAD(+). The polypeptide is L-threonate dehydrogenase (Cupriavidus necator (strain ATCC 17699 / DSM 428 / KCTC 22496 / NCIMB 10442 / H16 / Stanier 337) (Ralstonia eutropha)).